The primary structure comprises 922 residues: Coronin-7 (922 aa).

4 WD repeats span residues Cys-75–Pro-115, Pro-124–Glu-163, Ala-166–Gln-205, and Ala-209–Ala-253. The interval Asp-419 to Ser-467 is disordered. A compositionally biased stretch (low complexity) spans Ser-427–Ser-456. Phosphoserine occurs at positions 459 and 462. Residue Lys-469 forms a Glycyl lysine isopeptide (Lys-Gly) (interchain with G-Cter in ubiquitin) linkage. WD repeat units lie at residues Gln-539 to Thr-581, Gly-589 to Lys-629, Gly-632 to Gln-671, and Asp-725 to Leu-765. The interval Gly-858–Asp-922 is disordered. Positions Leu-881 to Leu-893 are enriched in basic and acidic residues. Phosphoserine is present on Ser-912.

This sequence belongs to the WD repeat coronin family. As to quaternary structure, interacts with clathrin adapter AP1 complex. This interaction takes place at Golgi membranes and not AP1-positive endosomal membranes. Interacts (when ubiquitinated at Lys-469) with EPS15. Post-translationally, the membrane-associated form is phosphorylated on tyrosine residues. Ubiquitinated via 'Lys-33'-linked ubiquitin chains by the BCR(KLHL20) E3 ubiquitin ligase complex: 'Lys-33'-linked ubiquitination promotes interaction with EPS15 and facilitates actin polymerization at the trans-Golgi network, thereby facilitating post-Golgi trafficking. Deubiquitinated by ZRANB1/TRABID. In terms of tissue distribution, in the adult, widely expressed with highest levels in brain, thymus and kidney and low levels in skeletal and heart muscle. Not expressed in lung. In the eye, strongly expressed in the outer plexiform layer of the retina. In the intestine, expressed both in terminally differentiated epithelial cells and in crypt epithelium. In the embryo, strongest expression is seen in brain, thymus, intestine, apical epidermal layers of the skin and developing lens fibers of the eye.

It localises to the golgi apparatus membrane. The protein localises to the golgi apparatus. It is found in the trans-Golgi network. Its subcellular location is the cytoplasmic vesicle. The protein resides in the cytoplasm. It localises to the cytosol. Its function is as follows. F-actin regulator involved in anterograde Golgi to endosome transport: upon ubiquitination via 'Lys-33'-linked ubiquitin chains by the BCR(KLHL20) E3 ubiquitin ligase complex, interacts with EPS15 and localizes to the trans-Golgi network, where it promotes actin polymerization, thereby facilitating post-Golgi trafficking. May play a role in the maintenance of the Golgi apparatus morphology. The protein is Coronin-7 (Coro7) of Mus musculus (Mouse).